The following is a 102-amino-acid chain: MMSRKSVIQRNLKRISICDRLKSKREKLRAIIKDQSISMNDRFLAQVKLSKLPRDSSYIRIRNRCLITGRPRGCYRKFKVSRIVLRQLGSIGQIPGLTKSSW.

The protein belongs to the universal ribosomal protein uS14 family. In terms of assembly, part of the 30S ribosomal subunit. Contacts proteins S3 and S10.

Binds 16S rRNA, required for the assembly of 30S particles and may also be responsible for determining the conformation of the 16S rRNA at the A site. The sequence is that of Small ribosomal subunit protein uS14 from Ehrlichia ruminantium (strain Gardel).